The following is a 283-amino-acid chain: Bifunctional protein FolD (283 aa).

Residues 166-168 (GRS), Ser-191, and Ile-232 each bind NADP(+).

It belongs to the tetrahydrofolate dehydrogenase/cyclohydrolase family. In terms of assembly, homodimer.

It catalyses the reaction (6R)-5,10-methylene-5,6,7,8-tetrahydrofolate + NADP(+) = (6R)-5,10-methenyltetrahydrofolate + NADPH. It carries out the reaction (6R)-5,10-methenyltetrahydrofolate + H2O = (6R)-10-formyltetrahydrofolate + H(+). Its pathway is one-carbon metabolism; tetrahydrofolate interconversion. Its function is as follows. Catalyzes the oxidation of 5,10-methylenetetrahydrofolate to 5,10-methenyltetrahydrofolate and then the hydrolysis of 5,10-methenyltetrahydrofolate to 10-formyltetrahydrofolate. The chain is Bifunctional protein FolD from Rickettsia bellii (strain RML369-C).